Here is a 1079-residue protein sequence, read N- to C-terminus: Electrogenic sodium bicarbonate cotransporter 1 (1079 aa).

Residues 1-62 form a required for interaction with AHCYL1 region; it reads MEDEAVLDRG…EKREKERISE (62 aa). At 1–466 the chain is on the cytoplasmic side; it reads MEDEAVLDRG…FASDFYDALN (466 aa). Tyr30 is modified (phosphotyrosine). Over residues 39–52 the composition is skewed to basic residues; it reads YRRRRRHKRKTGHK. Residues 39–78 are disordered; the sequence is YRRRRRHKRKTGHKEKREKERISENYSDKSDVENADESSS. Phosphothreonine; by PKA is present on Thr49. The segment covering 53–70 has biased composition (basic and acidic residues); that stretch reads EKREKERISENYSDKSDV. Ser61, Ser65, Ser68, Ser223, Ser232, Ser233, and Ser245 each carry phosphoserine. Residues 237 to 265 are disordered; it reads MFTSPDNGSPAMTHRNLTSSSLNDISDKP. A phosphothreonine mark is found at Thr249 and Thr254. The span at 251–260 shows a compositional bias: polar residues; it reads RNLTSSSLND. Residues Ser256, Ser257, and Ser262 each carry the phosphoserine modification. A helical transmembrane segment spans residues 467-491; that stretch reads IQSLSAILFIYLATVTNAITFGGLL. Over 492–501 the chain is Extracellular; that stretch reads GDATDNMQGV. A helical transmembrane segment spans residues 502–520; sequence LESFLGTAVSGAIFCLFAG. Gln521 is a topological domain (cytoplasmic). Residues 522-542 form a discontinuously helical membrane-spanning segment; the sequence is PLTILSSTGPVLVFERLLFNF. Residues 543 to 550 are Extracellular-facing; that stretch reads SKDHNFDY. The chain crosses the membrane as a helical span at residues 551–571; sequence LEFRLWIGLWSAFLCLILVAT. Residues 572-585 are Cytoplasmic-facing; the sequence is DASFLVQYFTRFTE. The chain crosses the membrane as a helical span at residues 586-609; that stretch reads EGFSSLISFIFIYDAFKKMIKLAD. Topologically, residues 610–692 are extracellular; that stretch reads YYPINSDFKV…GNNCNFVPDV (83 aa). A helical transmembrane segment spans residues 693 to 710; the sequence is TLMSFILFLGTYTSSMAL. The Cytoplasmic portion of the chain corresponds to 711–725; it reads KKFKTSRYFPTTARK. A helical membrane pass occupies residues 726–745; that stretch reads LISDFAIILSILIFCVIDAL. At 746–779 the chain is on the extracellular side; sequence VGVDTPKLIVPSEFKPTSPNRGWFVPPFGGNPWW. The tract at residues 748 to 779 is interaction with CA4; the sequence is VDTPKLIVPSEFKPTSPNRGWFVPPFGGNPWW. A helical membrane pass occupies residues 780–807; that stretch reads VYLAAAIPALLVTILIFMDQQITAVIVN. The Cytoplasmic portion of the chain corresponds to 808–819; sequence RKEHKLKKGAGY. Residues 820–836 form a helical membrane-spanning segment; it reads HLDLFWVAILMVVCSFM. A topological domain (extracellular) is located at residue Ala837. Residues 838-855 form a discontinuously helical membrane-spanning segment; it reads LPWYVAATVISIAHIDSL. The Cytoplasmic portion of the chain corresponds to 856–877; that stretch reads KMETETSAPGEQPKFLGVREQR. Residues 878 to 894 form a helical membrane-spanning segment; that stretch reads VTGTLVFILTGLSVFMA. Residues 895–901 lie on the Extracellular side of the membrane; that stretch reads PILKFIP. Residues 902–918 form a helical membrane-spanning segment; the sequence is MPVLYGVFLYMGVASLN. The Cytoplasmic portion of the chain corresponds to 919–960; it reads GVQFMDRLKLLLMPLKHQPDFIYLRHVPLRRVHLFTFLQVLC. The segment at residues 961 to 986 is an intramembrane region (discontinuously helical); that stretch reads LALLWILKSTVAAIIFPVMILALVAV. Residues 987–1079 lie on the Cytoplasmic side of the membrane; it reads RKGMDYLFSQ…STFLERHTSC (93 aa). The tract at residues 1002–1004 is CA2-binding; the sequence is LDD. The tract at residues 1012 to 1079 is disordered; the sequence is KKKEDEKKKK…STFLERHTSC (68 aa). Ser1026 carries the post-translational modification Phosphoserine; by PKA. Position 1029 is a phosphoserine (Ser1029). The interval 1030-1033 is CA2-binding; sequence DNDD. 2 positions are modified to phosphoserine: Ser1034 and Ser1044. Positions 1057–1059 are required for basolateral targeting; the sequence is FLS. The segment covering 1062 to 1079 has biased composition (basic and acidic residues); that stretch reads KPSDREKSSTFLERHTSC. A Phosphoserine modification is found at Ser1069.

It belongs to the anion exchanger (TC 2.A.31) family. Homodimer. Interacts with CA2/carbonic anhydrase 2 and CA4/carbonic anhydrase 4 which may regulate transporter activity. Isoform 1 but not isoform 2 interacts with AHCYL1 (via PEST domain when phosphorylated); the interaction increases SLC4A4 isoform 1 activity. Interacts with AHCYL2. Post-translationally, phosphorylation of Ser-1026 by PKA increases the binding of CA2 and changes the Na(+):HCO3(-) stoichiometry of the transporter from 3:1 to 2:1. Phosphorylated in presence of STK39 and dephosphorylated in presence of PP1 phosphatase; phosphorylation seems to inhibit SLC4A4 activity. In terms of processing, N-glycosylated. May not be necessary for the transporter basic functions. As to expression, expressed in colonic mucosa, kidney cortex and to gastric mucosa.

The protein localises to the basolateral cell membrane. It localises to the cell membrane. It carries out the reaction 2 hydrogencarbonate(out) + Na(+)(out) = 2 hydrogencarbonate(in) + Na(+)(in). It catalyses the reaction 3 hydrogencarbonate(out) + Na(+)(out) = 3 hydrogencarbonate(in) + Na(+)(in). Electrogenic sodium/bicarbonate cotransporter with a Na(+):HCO3(-) stoichiometry varying from 1:2 to 1:3. May regulate bicarbonate influx/efflux at the basolateral membrane of cells and regulate intracellular pH. The polypeptide is Electrogenic sodium bicarbonate cotransporter 1 (SLC4A4) (Oryctolagus cuniculus (Rabbit)).